A 427-amino-acid chain; its full sequence is 3-phosphoshikimate 1-carboxyvinyltransferase (427 aa).

Positions 22, 23, and 27 each coordinate 3-phosphoshikimate. Lysine 22 is a binding site for phosphoenolpyruvate. Residues glycine 96 and arginine 124 each contribute to the phosphoenolpyruvate site. Residues serine 169, serine 170, glutamine 171, serine 197, aspartate 313, asparagine 336, and lysine 340 each coordinate 3-phosphoshikimate. Phosphoenolpyruvate is bound at residue glutamine 171. Aspartate 313 (proton acceptor) is an active-site residue. 3 residues coordinate phosphoenolpyruvate: arginine 344, arginine 386, and lysine 411.

It belongs to the EPSP synthase family. Monomer.

The protein localises to the cytoplasm. It carries out the reaction 3-phosphoshikimate + phosphoenolpyruvate = 5-O-(1-carboxyvinyl)-3-phosphoshikimate + phosphate. Its pathway is metabolic intermediate biosynthesis; chorismate biosynthesis; chorismate from D-erythrose 4-phosphate and phosphoenolpyruvate: step 6/7. Catalyzes the transfer of the enolpyruvyl moiety of phosphoenolpyruvate (PEP) to the 5-hydroxyl of shikimate-3-phosphate (S3P) to produce enolpyruvyl shikimate-3-phosphate and inorganic phosphate. The polypeptide is 3-phosphoshikimate 1-carboxyvinyltransferase (Escherichia coli O6:H1 (strain CFT073 / ATCC 700928 / UPEC)).